The sequence spans 117 residues: MDMRVPAQLLGLLLLWLSGARCDIQMTQSPSSLSASVGDRVTITCQASQDISNYLNWYQQKPGKAPKLLIYDASNLETGVPSRFSGSGSGTDFTFTISSLQPEDIATYYCQQYDNLP.

Positions Met-1–Cys-22 are cleaved as a signal peptide. The interval Asp-23–Cys-45 is framework-1. Residues Ile-24–Pro-117 form the Ig-like domain. Cys-45 and Cys-110 are disulfide-bonded. The segment at Gln-46–Asn-56 is complementarity-determining-1. A framework-2 region spans residues Trp-57 to Tyr-71. Positions Asp-72 to Thr-78 are complementarity-determining-2. Residues Gly-79–Cys-110 form a framework-3 region. Residues Gln-111–Pro-117 are complementarity-determining-3.

In terms of assembly, immunoglobulins are composed of two identical heavy chains and two identical light chains; disulfide-linked.

The protein localises to the secreted. It is found in the cell membrane. V region of the variable domain of immunoglobulin light chains that participates in the antigen recognition. Immunoglobulins, also known as antibodies, are membrane-bound or secreted glycoproteins produced by B lymphocytes. In the recognition phase of humoral immunity, the membrane-bound immunoglobulins serve as receptors which, upon binding of a specific antigen, trigger the clonal expansion and differentiation of B lymphocytes into immunoglobulins-secreting plasma cells. Secreted immunoglobulins mediate the effector phase of humoral immunity, which results in the elimination of bound antigens. The antigen binding site is formed by the variable domain of one heavy chain, together with that of its associated light chain. Thus, each immunoglobulin has two antigen binding sites with remarkable affinity for a particular antigen. The variable domains are assembled by a process called V-(D)-J rearrangement and can then be subjected to somatic hypermutations which, after exposure to antigen and selection, allow affinity maturation for a particular antigen. This is Immunoglobulin kappa variable 1-33 from Homo sapiens (Human).